Reading from the N-terminus, the 456-residue chain is tRNA modification GTPase MnmE (456 aa).

Residues Arg23, Glu85, and Arg124 each contribute to the (6S)-5-formyl-5,6,7,8-tetrahydrofolate site. The 157-residue stretch at 220–376 folds into the TrmE-type G domain; sequence GVAVLIAGKP…LKESIFQTFI (157 aa). A K(+)-binding site is contributed by Asn230. Residues 230–235, 249–255, and 274–277 contribute to the GTP site; these read NVGKSS, TSVPGTT, and DTAG. Ser234 contributes to the Mg(2+) binding site. The K(+) site is built by Thr249, Val251, and Thr254. Thr255 provides a ligand contact to Mg(2+). Lys456 provides a ligand contact to (6S)-5-formyl-5,6,7,8-tetrahydrofolate.

Belongs to the TRAFAC class TrmE-Era-EngA-EngB-Septin-like GTPase superfamily. TrmE GTPase family. In terms of assembly, homodimer. Heterotetramer of two MnmE and two MnmG subunits. K(+) is required as a cofactor.

The protein resides in the cytoplasm. In terms of biological role, exhibits a very high intrinsic GTPase hydrolysis rate. Involved in the addition of a carboxymethylaminomethyl (cmnm) group at the wobble position (U34) of certain tRNAs, forming tRNA-cmnm(5)s(2)U34. This chain is tRNA modification GTPase MnmE, found in Geobacter sulfurreducens (strain ATCC 51573 / DSM 12127 / PCA).